An 853-amino-acid chain; its full sequence is Transforming growth factor beta receptor type 3 (853 aa).

The first 23 residues, 1-23 (MAVTSHHMIPVMVVLMSACLATA), serve as a signal peptide directing secretion. The Extracellular segment spans residues 24 to 789 (GPEPSTRCEL…IFHGLDTLTV (766 aa)). N-linked (GlcNAc...) asparagine glycans are attached at residues N37, N144, and N493. C55 and C200 form a disulfide bridge. Residues 456-730 (KCDHEKMVVA…PRCVTPDDAC (275 aa)) form the ZP domain. Residues 530–559 (SPGDSSGWPDGYEDLESGDNGFPGDGDEGE) are disordered. O-linked (Xyl...) (glycosaminoglycan) serine glycans are attached at residues S535 and S546. Residues N572, N591, and N698 are each glycosylated (N-linked (GlcNAc...) asparagine). Disulfide bonds link C640–C706, C661–C730, and C711–C723. The interaction with TGF-beta ligand stretch occupies residues 737 to 751 (MIWTMMQNKKTFTKP). The helical transmembrane segment at 790–811 (MGIAFAAFVIGALLTGALWYIY) threads the bilayer. At 812–853 (SHTGETARRQQVPTSPPASENSSAAHSIGSTQSTPCSSSSTA) the chain is on the cytoplasmic side. Over residues 820–836 (RQQVPTSPPASENSSAA) the composition is skewed to polar residues. The disordered stretch occupies residues 820 to 853 (RQQVPTSPPASENSSAAHSIGSTQSTPCSSSSTA). Residues 838-853 (SIGSTQSTPCSSSSTA) show a composition bias toward low complexity. T842 is subject to Phosphothreonine.

As to quaternary structure, forms homodimers and homooligomers. Interacts with DYNLT4. Interacts with integrin ITGA5:ITGB1; this interaction promotes the internalization and trafficking of ITGA5:ITGB1 into endocytic vesicles. Interacts with TGFB1, BMP2, BMP5, BMP7 or GDF5 and inhibin A via the ligand binding domains. Interacts with ALK3/BMPR1A; this interaction results in the cell surface retention of BMPR1A. Interacts with ALK6/BMPR1B; this interaction enhances BMPR1B-mediated stimulation of the BMP signaling pathway. Interacts with the scaffolding protein beta-arrestin2/ARRB2; this interaction mediates internalization of TGFBR3 and thus regulates migration, actin cytoskeleton and activation of CDC42. In terms of processing, extensively modified by glycosaminoglycan groups (GAG). Phosphorylated in the cytoplasmic domain by the type II receptor TGFBR2 at THR-842 to mediate recruitment of ARRB2 and subsequent internalization of TGFBR2 and TGFBR3.

It is found in the cell membrane. Its subcellular location is the secreted. The protein resides in the extracellular space. The protein localises to the extracellular matrix. Cell surface receptor that regulates diverse cellular processes including cell proliferation, differentiation, migration, and apoptosis. Initiates BMP, inhibin, and TGF-beta signaling pathways by interacting with different ligands including TGFB1, BMP2, BMP5, BMP7 or GDF5. Alternatively, acts as a cell surface coreceptor for BMP ligands, serving to enhance ligand binding by differentially regulating BMPR1A/ALK3 and BMPR1B/ALK6 receptor trafficking. Promotes epithelial cell adhesion, focal adhesion formation and integrin signaling during epithelial cell spreading on fibronectin. By interacting with the scaffolding protein beta-arrestin2/ARRB2, regulates migration or actin cytoskeleton and promotes the activation of CDC42 as well as the inhibition of NF-kappa-B. In gonadotrope cells, acts as an inhibin A coreceptor and regulates follicle-stimulating hormone (FSH) levels and female fertility. Plays a role in the inhibition of directed and random cell migration in epithelial cells by altering the actin cytoskeletal organization. Participates in epithelial-mesenchymal transformation (EMT) upon binding to BMP2 or TGFB2, by activating the PAR6/SMURF1/RHOA pathway. This is Transforming growth factor beta receptor type 3 (Tgfbr3) from Rattus norvegicus (Rat).